Reading from the N-terminus, the 265-residue chain is MVELKEPFATLWRGKDPFEEVKTLQGEVFRELETRRTLRFEMAGKSYFLKWHRGTTLKEIIKNLLSLRMPVLGADREWNAIHRLRDVGVDTMYGVAFGEKGMNPLTRTSFIITEDLTPTISLEDYCADWATNPPDVRVKRMLIKRVATMVRDMHAAGINHRDCYICHFLLHLPFSGKEEELKISVIDLHRAQLRTRVPRRWRDKDLIGLYFSSMNIGLTQRDIWRFMKVYFAAPLKDILKQEQGLLSQAEAKATKIRERTIRKSL.

Residue Asp162 is part of the active site.

This sequence belongs to the protein kinase superfamily. KdkA/RfaP family. Mg(2+) is required as a cofactor.

Its subcellular location is the cell inner membrane. The enzyme catalyses an L-alpha-D-Hep-(1-&gt;3)-L-alpha-D-Hep-(1-&gt;5)-[alpha-Kdo-(2-&gt;4)]-alpha-Kdo-(2-&gt;6)-lipid A + ATP = an L-alpha-D-Hep-(1-&gt;3)-4-O-phospho-L-alpha-D-Hep-(1-&gt;5)-[alpha-Kdo-(2-&gt;4)]-alpha-Kdo-(2-&gt;6)-lipid A + ADP + H(+). It catalyses the reaction L-alpha-D-Hep-(1-&gt;3)-L-alpha-D-Hep-(1-&gt;5)-[alpha-Kdo-(2-&gt;4)]-alpha-Kdo-(2-&gt;6)-lipid A (E. coli) + ATP = L-alpha-D-Hep-(1-&gt;3)-4-O-phospho-L-alpha-D-Hep-(1-&gt;5)-[alpha-Kdo-(2-&gt;4)]-alpha-Kdo-(2-&gt;6)-lipid A (E. coli) + ADP + H(+). The protein operates within bacterial outer membrane biogenesis; LPS core biosynthesis. In terms of biological role, kinase involved in the biosynthesis of the core oligosaccharide region of lipopolysaccharide (LPS). Catalyzes the phosphorylation of heptose I (HepI), the first heptose added to the Kdo2-lipid A module. This chain is Lipopolysaccharide core heptose(I) kinase WaaP, found in Escherichia coli.